The sequence spans 298 residues: Bifunctional protein FolD (298 aa).

NADP(+) is bound by residues 165 to 167, Ser-190, and Ile-231; that span reads GRS.

This sequence belongs to the tetrahydrofolate dehydrogenase/cyclohydrolase family. In terms of assembly, homodimer.

The catalysed reaction is (6R)-5,10-methylene-5,6,7,8-tetrahydrofolate + NADP(+) = (6R)-5,10-methenyltetrahydrofolate + NADPH. It carries out the reaction (6R)-5,10-methenyltetrahydrofolate + H2O = (6R)-10-formyltetrahydrofolate + H(+). Its pathway is one-carbon metabolism; tetrahydrofolate interconversion. Functionally, catalyzes the oxidation of 5,10-methylenetetrahydrofolate to 5,10-methenyltetrahydrofolate and then the hydrolysis of 5,10-methenyltetrahydrofolate to 10-formyltetrahydrofolate. The sequence is that of Bifunctional protein FolD from Prochlorococcus marinus (strain AS9601).